The primary structure comprises 389 residues: Alanine racemase (389 aa).

Lysine 48 functions as the Proton acceptor; specific for D-alanine in the catalytic mechanism. The residue at position 48 (lysine 48) is an N6-(pyridoxal phosphate)lysine. Residue arginine 144 participates in substrate binding. The active-site Proton acceptor; specific for L-alanine is tyrosine 281. Position 329 (methionine 329) interacts with substrate.

Belongs to the alanine racemase family. It depends on pyridoxal 5'-phosphate as a cofactor.

The catalysed reaction is L-alanine = D-alanine. The protein operates within amino-acid biosynthesis; D-alanine biosynthesis; D-alanine from L-alanine: step 1/1. Catalyzes the interconversion of L-alanine and D-alanine. May also act on other amino acids. In Leptospira interrogans serogroup Icterohaemorrhagiae serovar Lai (strain 56601), this protein is Alanine racemase (alr).